A 210-amino-acid polypeptide reads, in one-letter code: MSTIEAAKPKTEVSPLLKLVLELGPLMVFFFANSRGEWLAGRFPALAELGGPIFIATGLFMAATAAALIASWIMTRTLPMMPLVSGIVVFVFGALTLWLQNDTFIKMKPTIVNTLFGAILLGGLLFGKSLLGYVFHAAFKLDEEGWRKLTIRWGVFFLFLAVLNEVIWRSFSTDFWVAFKVWGTMPITILFTLAQMPLIMKHSLEQDSAE.

6 helical membrane-spanning segments follow: residues 12–32 (EVSP…FFFA), 53–73 (IFIA…ASWI), 78–98 (LPMM…LTLW), 115–135 (LFGA…GYVF), 148–168 (KLTI…EVIW), and 175–195 (FWVA…TLAQ).

The protein belongs to the YciB family.

Its subcellular location is the cell inner membrane. Plays a role in cell envelope biogenesis, maintenance of cell envelope integrity and membrane homeostasis. The chain is Inner membrane-spanning protein YciB from Rhizobium meliloti (strain 1021) (Ensifer meliloti).